Here is a 1210-residue protein sequence, read N- to C-terminus: Adenine-specific methyltransferase PglX (1210 aa).

Residues 1181-1194 (KQGEHGLTDDDLRG) are compositionally biased toward basic and acidic residues. Residues 1181 to 1210 (KQGEHGLTDDDLRGWRPPAATRRRRAAAKQ) form a disordered region. Basic residues predominate over residues 1201–1210 (TRRRRAAAKQ).

The protein belongs to the methyltransferase superfamily. PglX adenine methyltransferase family.

It carries out the reaction a 2'-deoxyadenosine in DNA + S-adenosyl-L-methionine = an N(6)-methyl-2'-deoxyadenosine in DNA + S-adenosyl-L-homocysteine + H(+). Functionally, BREX systems (bacteriophage exclusion) provide immunity against bacteriophage. Part of a type 2 BREX system. Probably a DNA methyltransferase, it methylates phage DNA in vitro in an S-adenosyl-L-methionine-dependent manner. Previously called the phage growth limitation (Pgl) system, it confers protection against bacteriophage phiC31. The bacteria allows one cycle of phage infection, but subsequent cycles are impaired, protecting the original bacterial colony. The system undergoes high rates (10(-3) to 10(-4)) of phase reversion, i.e. loss and regain of phiC31 resistance. When the pglW-pglX-pglY-pglZ genes are transformed into a susceptible S.lividans (strain 1326) they confer resistance to infection by phage phiC31 and phiBT1; all 4 genes are necessary. In terms of biological role, probably a toxic component of a type II toxin-antitoxin (TA) system. The toxic activity is inhibited by its cognate antitoxin PglZ. May be a subtypes G and alpha restriction enzyme that recognizes and cleaves an unknown sequence. Methylates an adenine residue in the same sequence. This Streptomyces coelicolor (strain ATCC BAA-471 / A3(2) / M145) protein is Adenine-specific methyltransferase PglX.